Consider the following 358-residue polypeptide: Forkhead box protein I1c (358 aa).

Over residues 1–13 the composition is skewed to polar residues; sequence MNSIHLPSHQRTS. Disordered regions lie at residues 1–25 and 191–255; these read MNSIHLPSHQRTSAPGLHQHRPKGA and DNGN…PSGI. The segment at residues 106 to 200 is a DNA-binding region (fork-head); the sequence is RPPYSYSALI…DNGNFRRKRK (95 aa).

It localises to the nucleus. Functionally, probable transcription factor. This Xenopus tropicalis (Western clawed frog) protein is Forkhead box protein I1c.